A 1083-amino-acid chain; its full sequence is DNA primase (1083 aa).

The CHC2-type zinc finger occupies 1022–1061; the sequence is CLRYPHRGGRTAPRTFVSLRVDHHNRLCISLAQQCFATKC.

It belongs to the herpesviridae DNA primase family. Associates with the helicase and the primase-associated factor to form the helicase-primase factor.

It localises to the host nucleus. Its function is as follows. Essential component of the helicase/primase complex. Unwinds the DNA at the replication forks and generates single-stranded DNA for both leading and lagging strand synthesis. The primase initiates primer synthesis and thereby produces large amount of short RNA primers on the lagging strand that the polymerase elongates using dNTPs. The chain is DNA primase from Varicella-zoster virus (strain Oka vaccine) (HHV-3).